The following is a 551-amino-acid chain: Chaperonin GroEL 2 (551 aa).

Residues 30 to 33 (TLGP), Lys-51, 87 to 91 (DGTTT), Gly-415, and Asp-496 contribute to the ATP site.

This sequence belongs to the chaperonin (HSP60) family. Forms a cylinder of 14 subunits composed of two heptameric rings stacked back-to-back. Interacts with the co-chaperonin GroES.

The protein resides in the cytoplasm. The enzyme catalyses ATP + H2O + a folded polypeptide = ADP + phosphate + an unfolded polypeptide.. Its function is as follows. Together with its co-chaperonin GroES, plays an essential role in assisting protein folding. The GroEL-GroES system forms a nano-cage that allows encapsulation of the non-native substrate proteins and provides a physical environment optimized to promote and accelerate protein folding. The sequence is that of Chaperonin GroEL 2 from Rhodopseudomonas palustris (strain BisB18).